The primary structure comprises 694 residues: Follicle-stimulating hormone receptor (694 aa).

A signal peptide spans 1–17 (MAFLWISFLVFLGSGSG). Cystine bridges form between cysteine 18/cysteine 25 and cysteine 23/cysteine 32. The LRRNT domain maps to 18-46 (CHHRICHCSDRVFICQESKVTEIPSDIPR). Topologically, residues 18 to 367 (CHHRICHCSD…EDIMGYNFLR (350 aa)) are extracellular. LRR repeat units lie at residues 49–72 (VEMR…FRDL), 73–97 (EKIE…LPKL), 98–118 (HEIR…AFWN), 119–143 (LPNL…KIQS), 144–169 (HQKV…AGLS), 170–192 (SESE…AFNG), 193–216 (TQLD…IFQG), 217–240 (ANGP…GLKN), and 241–259 (LKKL…PNLD). Asparagine 191 and asparagine 199 each carry an N-linked (GlcNAc...) asparagine glycan. N-linked (GlcNAc...) asparagine glycosylation occurs at asparagine 268. Cystine bridges form between cysteine 275/cysteine 347, cysteine 276/cysteine 292, cysteine 276/cysteine 357, and cysteine 292/cysteine 339. The N-linked (GlcNAc...) asparagine glycan is linked to asparagine 293. A Sulfotyrosine modification is found at tyrosine 336. The helical transmembrane segment at 368–388 (VLIWFISILSITGNIVVLVIL) threads the bilayer. Residues 389 to 399 (ITSQYKLTVPR) are Cytoplasmic-facing. Residues 400–422 (FLMCNLAFADLCIGIYLLLIASV) form a helical membrane-spanning segment. At 423-444 (DIHTKSQYHNYAIDWQTGAGCD) the chain is on the extracellular side. Cysteine 443 and cysteine 518 are disulfide-bonded. A helical transmembrane segment spans residues 445–466 (AAGFFTVFASELSVYTLTAITL). Residues 467 to 486 (ERWHTITYAMQLDRKVRLRH) are Cytoplasmic-facing. A helical transmembrane segment spans residues 487–509 (AASIMLIGWIFAFSVALLPIFGV). The Extracellular portion of the chain corresponds to 510 to 529 (SSYMKVSICLPMDIDSPLSQ). A helical transmembrane segment spans residues 530–551 (FYVISLLVLNVLASVIICTCYT). Residues 552-574 (HIYFTVRNPNIISSTSDAKIAKR) lie on the Cytoplasmic side of the membrane. A helical membrane pass occupies residues 575-598 (MAMLIFTDFLCMAPISFFAISASV). The Extracellular segment spans residues 599 to 609 (KMPLITVSKSK). The chain crosses the membrane as a helical span at residues 610–631 (ILLVLFYPINSCANPFLYAVFT). Residues 632 to 694 (KTFRRDFFIL…YKLVPLNHLS (63 aa)) are Cytoplasmic-facing.

Belongs to the G-protein coupled receptor 1 family. FSH/LSH/TSH subfamily. As to quaternary structure, homotrimer. Functions as a homotrimer binding the FSH hormone heterodimer composed of CGA and FSHB. Interacts with ARRB2. Interacts with APPL2; interaction is independent of follicle stimulating hormone stimulation. Post-translationally, N-glycosylated; indirectly required for FSH-binding, possibly via a conformational change that allows high affinity binding of hormone. In terms of processing, sulfated.

It is found in the cell membrane. In terms of biological role, g protein-coupled receptor for follitropin, the follicle-stimulating hormone. Through cAMP production activates the downstream PI3K-AKT and ERK1/ERK2 signaling pathways. The polypeptide is Follicle-stimulating hormone receptor (FSHR) (Notamacropus eugenii (Tammar wallaby)).